A 1273-amino-acid polypeptide reads, in one-letter code: Inverted formin-2 (1273 aa).

5 disordered regions span residues 1–30, 346–387, 427–559, 960–999, and 1021–1273; these read MSVKEGAQRKWAALKEKLGPQDSDPTEANL, GRPR…GQQP, LSSS…PLPG, NKDRKEQMAKAERRKQQLAEEEARRPRDEDGKPIRKGPGK, and KTAR…CVIQ. Ser-2 is subject to N-acetylserine. A GBD/FH3 domain is found at 2–330; it reads SVKEGAQRKW…RAVLLASDAQ (329 aa). Residue Ser-351 is modified to Phosphoserine. Residues 359–382 are compositionally biased toward low complexity; sequence SVQTNSVQNQGSSSQNTTTPTTKV. Residues 421–564 enclose the FH1 domain; that stretch reads PLPTPPLSSS…PPLPGFSVPS (144 aa). Pro residues-rich tracts occupy residues 433–516 and 524–558; these read VLPP…PLPS and QPPPPPPPPLPGMCPVPPPPPLPRAGQIPPPPPLP. The FH2 domain occupies 589 to 979; that stretch reads HRRVNPPTLR…AERRKQQLAE (391 aa). The stretch at 907-984 forms a coiled coil; it reads EASQELDKVF…QQLAEEEARR (78 aa). In terms of domain architecture, WH2 spans 1007 to 1022; sequence DALLADIRKGFQLRKT. The segment covering 1047–1059 has biased composition (polar residues); that stretch reads ATASNPTQGTNHP. Residues 1088–1101 show a composition bias toward basic and acidic residues; the sequence is SKEEDGPPALERRS. 2 positions are modified to phosphoserine: Ser-1172 and Ser-1174. The span at 1195-1204 shows a compositional bias: acidic residues; that stretch reads GEDEDGEDTA. Thr-1203 bears the Phosphothreonine mark. 2 positions are modified to phosphoserine: Ser-1216 and Ser-1218. Thr-1223 and Thr-1230 each carry phosphothreonine. Basic residues predominate over residues 1242–1251; that stretch reads TSKRRKKRPS.

Belongs to the formin homology family. Interacts with profilin and actin at the FH1 and FH2 domains respectively. Interacts with DAAM2.

The protein localises to the cytoplasm. It localises to the perinuclear region. With respect to regulation, phosphate inhibits both the depolymerization and severing activities. Severs actin filaments and accelerates their polymerization and depolymerization. This is Inverted formin-2 (Inf2) from Mus musculus (Mouse).